The primary structure comprises 266 residues: Apoptosis regulator ced-9 (266 aa).

The tract at residues 1 to 58 (MVDSMDMANSSQNTFRRRTMATSEMREFLSTKDAEPNNFGMQTIPESPTPSTPTRRMS) is disordered. A compositionally biased stretch (basic and acidic residues) spans 24–35 (EMREFLSTKDAE). Residues 75–94 (IQGFVVDYFTYRIAQNGLDW) carry the BH4 motif. The BH1 motif lies at 156 to 174 (NTPCPMSYGRLIGLISFGG). Residues 208 to 223 (SWKEHNRSWADFMKLG) carry the BH2 motif.

Belongs to the Bcl-2 family. Interacts with asymmetric homodimer ced-4; the interaction sequesters ced-4. Interacts with egl-1; the interaction results in ced-4 release. Interacts with dre-1; the interaction inhibits ced-9 activity, either directly or indirectly. Interacts with dct-1. May form a complex composed of ced-9, ced-4 and mac-1.

It is found in the perikaryon. The protein localises to the synapse. It localises to the endomembrane system. Its subcellular location is the mitochondrion membrane. Plays a major role in programmed cell death (PCD, apoptosis). egl-1 binds to and directly inhibits the activity of ced-9, releasing the cell death activator ced-4 from a ced-9/ced-4 containing protein complex and allowing ced-4 to activate the cell-killing caspase ced-3. During larval development, required for the elimination of transient presynaptic components downstream of egl-1 and upstream of ced-4 and ced-3 apoptotic pathway. In Caenorhabditis briggsae, this protein is Apoptosis regulator ced-9 (ced-9).